Here is a 137-residue protein sequence, read N- to C-terminus: Large ribosomal subunit protein uL16 (137 aa).

The protein belongs to the universal ribosomal protein uL16 family. Part of the 50S ribosomal subunit.

Binds 23S rRNA and is also seen to make contacts with the A and possibly P site tRNAs. This Wolbachia sp. subsp. Brugia malayi (strain TRS) protein is Large ribosomal subunit protein uL16.